An 808-amino-acid polypeptide reads, in one-letter code: Sucrose synthase 2 (808 aa).

Ser10 is subject to Phosphoserine; by CPK. The segment at 272 to 749 (MMFNVVILSP…GLQRIYEKYT (478 aa)) is GT-B glycosyltransferase.

Belongs to the glycosyltransferase 1 family. Plant sucrose synthase subfamily. Homotetramer or heterotetramer with SUS1. Phosphorylated at Ser-10 by CPK23 in developing seeds. As to expression, predominantly expressed in the leaf tissues. Expressed in seeds, and at lower levels in roots. Expressed in leaf mesophyll and phloem (at protein level).

The enzyme catalyses an NDP-alpha-D-glucose + D-fructose = a ribonucleoside 5'-diphosphate + sucrose + H(+). With respect to regulation, activated by phosphorylation at Ser-10 by CPK23. Functionally, sucrose-cleaving enzyme that provides UDP-glucose and fructose for various metabolic pathways. Functions in developing seeds by supplying substrates for the biosynthesis of storage products. The polypeptide is Sucrose synthase 2 (SUS2) (Oryza sativa subsp. japonica (Rice)).